We begin with the raw amino-acid sequence, 363 residues long: Strychnine O-methyltransferase (363 aa).

Residues Gly-204, Asp-227, Asp-249, Met-250, and Lys-263 each contribute to the S-adenosyl-L-methionine site. The active-site Proton acceptor is His-267.

The protein belongs to the class I-like SAM-binding methyltransferase superfamily. Cation-independent O-methyltransferase family.

The catalysed reaction is 10-hydroxystrychnine + S-adenosyl-L-methionine = beta-colubrine + S-adenosyl-L-homocysteine + H(+). It carries out the reaction 11-demethylbrucine + S-adenosyl-L-methionine = brucine + S-adenosyl-L-homocysteine + H(+). It functions in the pathway alkaloid biosynthesis. O-methyltransferase involved in the biosynthesis of curare monoterpene indole alkaloids (MIAs), natural products such as strychnine, a neurotoxic compound used as a pesticide to control rodents, and its pharmacologically active derivatives, including brucine, used to regulate blood pressure. Curare alkaloids act as animal glycine receptor antagonists. Catalyzes the conversion of 10-OH strychnine to beta-colubrine, and of 11-deMe brucine to brucine. The protein is Strychnine O-methyltransferase of Strychnos nux-vomica (Poison nut).